Reading from the N-terminus, the 322-residue chain is Atrochrysone carboxyl ACP thioesterase dmxR1 (322 aa).

Residues His-105, His-107, Asp-109, and His-110 each contribute to the Zn(2+) site. Asp-109 acts as the Proton donor/acceptor in catalysis.

The protein belongs to the metallo-beta-lactamase superfamily. The cofactor is Zn(2+).

It carries out the reaction atrochrysone carboxyl-[ACP] + H2O = atrochrysone carboxylate + holo-[ACP] + H(+). It functions in the pathway secondary metabolite biosynthesis. Atrochrysone carboxyl ACP thioesterase; part of the gene cluster that mediates the biosynthesis of the dimeric xanthones cryptosporioptides. The pathway begins with the synthesis of atrochrysone thioester by the polyketide synthase dmx-nrPKS. The atrochrysone carboxyl ACP thioesterase dmxR1 then breaks the thioester bond and releases the atrochrysone carboxylic acid from dmx-nrPKS. Atrochrysone carboxylic acid is decarboxylated by the decarboxylase dmxR15, and oxidized by the anthrone oxygenase dmxR16 to yield emodin. Emodin is then reduced to emodin hydroquinone by the oxidoreductase dmxR7. A-ring reduction by the short chain dehydrogenase dmxR18, dehydration by the scytalone dehydratase-like protein dmxR17 and probable spontaneous re-oxidation, results in overall deoxygenation to chrysophanol. Baeyer-Villiger oxidation by the Baeyer-Villiger monooxygenase (BVMO) dmxR6 then yields monodictylactone in equilibrium with monodictyphenone. In the case of the cryptosporioptides biosynthesis, monodictylactone is reduced at C-12 to an alcohol (by the short chain dehydrogenases dmxR12 or dmxR8) and hydroxylated at C-5 by dmxR9, yielding the electron-rich aromatic which could eliminate H(2)O to form the ortho-quinonemethide, followed by tautomerisation to paraquinone and complete the formal reduction to produce the 10-methylgroup. Conjugate addition of C-4a-OH to the resulting paraquinone by the monooxygenase dmxR10 then gives cyclohexadienone, which is then reduced at C-5 by the short chain dehydrogenase dmxR3 to give the dihydroxanthone. The 6,7-epoxide in the cryptosporioptides could be introduced by the cytochrome P450 monooxygenase dmxL3. The highly reducing PKS dmxL2 manufactures butyrate, which is further carboxylated by dmxL1 to form ethylmalonate. It is not yet clear whether the carboxylation occurs while the butyrate is attached to the ACP of dmxL2, but this unusual fungal metabolite could then be esterified to O-5 by the O-acetyltransferase dmxR13. Finally, dimerization performed by dmxR5 gives the observed dimers cryptosporioptides A, B and C as the final products of the pathway. This Cryptosporiopsis sp. (strain 8999) protein is Atrochrysone carboxyl ACP thioesterase dmxR1.